The primary structure comprises 603 residues: Protein US26 (603 aa).

Over residues 496 to 513 the composition is skewed to acidic residues; the sequence is EEEDQEEDDTSDDDDQEK. 2 disordered regions span residues 496–536 and 549–568; these read EEED…GSLE and AVAE…DTAQ. Over residues 517–533 the composition is skewed to polar residues; that stretch reads NPQNNIGSLTRTPSSPG.

It belongs to the herpesviridae US22 family.

The sequence is that of Protein US26 (US26) from Human cytomegalovirus (strain Merlin) (HHV-5).